The sequence spans 170 residues: ATP synthase subunit b, chloroplastic (170 aa).

A helical transmembrane segment spans residues 15–35; that stretch reads ILETNVINLAVVVGVVVFFVG.

Belongs to the ATPase B chain family. F-type ATPases have 2 components, F(1) - the catalytic core - and F(0) - the membrane proton channel. F(1) has five subunits: alpha(3), beta(3), gamma(1), delta(1), epsilon(1). F(0) has four main subunits: a(1), b(1), b'(1) and c(10-14). The alpha and beta chains form an alternating ring which encloses part of the gamma chain. F(1) is attached to F(0) by a central stalk formed by the gamma and epsilon chains, while a peripheral stalk is formed by the delta, b and b' chains.

The protein localises to the plastid. The protein resides in the chloroplast thylakoid membrane. Its function is as follows. F(1)F(0) ATP synthase produces ATP from ADP in the presence of a proton or sodium gradient. F-type ATPases consist of two structural domains, F(1) containing the extramembraneous catalytic core and F(0) containing the membrane proton channel, linked together by a central stalk and a peripheral stalk. During catalysis, ATP synthesis in the catalytic domain of F(1) is coupled via a rotary mechanism of the central stalk subunits to proton translocation. Component of the F(0) channel, it forms part of the peripheral stalk, linking F(1) to F(0). This is ATP synthase subunit b, chloroplastic from Stigeoclonium helveticum (Green alga).